The sequence spans 1135 residues: Ubiquitin carboxyl-terminal hydrolase 7 (1135 aa).

The MATH domain maps to 31-172 (EGHLSLDIDC…NDTIKLRCRF (142 aa)). Positions 193–503 (IGLRNQGATC…SAYMLVYVRD (311 aa)) constitute a USP domain. C202 (nucleophile) is an active-site residue. The active-site Proton acceptor is the H442.

The protein belongs to the peptidase C19 family.

The protein resides in the nucleus. It catalyses the reaction Thiol-dependent hydrolysis of ester, thioester, amide, peptide and isopeptide bonds formed by the C-terminal Gly of ubiquitin (a 76-residue protein attached to proteins as an intracellular targeting signal).. In terms of biological role, hydrolase that deubiquitinates target proteins. May play a role in regulating the levels of endogenous siRNA biogenesis. The protein is Ubiquitin carboxyl-terminal hydrolase 7 of Caenorhabditis elegans.